The sequence spans 263 residues: Lens fiber major intrinsic protein (263 aa).

Residues 1 to 9 (MWELRSASF) are Cytoplasmic-facing. A helical transmembrane segment spans residues 10–29 (WRAICAEFFASLFYVFFGLG). At 30-41 (ASLRWAPGPLHV) the chain is on the extracellular side. The helical transmembrane segment at 42 to 59 (LQVALAFGLALATLVQAV) threads the bilayer. Residues 60–61 (GH) are Cytoplasmic-facing. The segment at residues 62–77 (ISGAHVNPAVTFAFLV) is an intramembrane region (discontinuously helical). Residues 68 to 70 (NPA) carry the NPA 1 motif. Topologically, residues 78-82 (GSQMS) are cytoplasmic. Residues 83–106 (LLRAICYMVAQLLGAVAGAAVLYS) form a helical membrane-spanning segment. At 107–127 (VTPPAVRGNLALNTLHPGVSV) the chain is on the extracellular side. Residues 128–148 (GQATIVEIFLTLQFVLCIFAT) form a helical membrane-spanning segment. The Cytoplasmic segment spans residues 149 to 156 (YDERRNGR). A helical membrane pass occupies residues 157-175 (LGSVALAVGFSLTLGHLFG). Over 176 to 178 (MYY) the chain is Extracellular. The discontinuously helical intramembrane region spans 179–193 (TGAGMNPARSFAPAI). The NPA 2 signature appears at 184 to 186 (NPA). At 194-200 (LTRNFTN) the chain is on the extracellular side. A helical transmembrane segment spans residues 201-222 (HWVYWVGPVIGAGLGSLLYDFL). Residues 223–263 (LFPRLKSVSERLSILKGSRPSESNGQPEVTGEPVELKTQAL) lie on the Cytoplasmic side of the membrane. Residues 227 to 237 (LKSVSERLSIL) are interaction with CALM. At Ser-235 the chain carries Phosphoserine. Residues 239-263 (GSRPSESNGQPEVTGEPVELKTQAL) form a disordered region. Residue Ser-243 is modified to Phosphoserine; by PKA. At Ser-245 the chain carries Phosphoserine. Asn-246 carries the post-translational modification Deamidated asparagine.

Belongs to the MIP/aquaporin (TC 1.A.8) family. Homotetramer; each monomer provides an independent water pore. Two homotetramers on opposing membranes can dimerize, forming a cell-cell junction. Interacts with CALM; the calcium-calmodulin/CALM complex interacts with the cytoplasmic domains of two aquaporins, leading to channel closure. Interacts with BFSP1 (via C-terminus); prevents calcium-dependent inhibition of the water channel activity. In terms of processing, fatty acylated at Met-1 and Lys-238. The acyl modifications, in decreasing order of ion abundance, are: oleoyl (C18:1) &gt; palmitoyl (C16:0) &gt; stearoyl (C18:0) &gt; eicosenoyl (C20:1) &gt; dihomo-gamma-linolenoyl (C20:3) &gt; palmitoleoyl (C16:1) &gt; eicosadienoyl (C20:2). Post-translationally, subject to partial proteolytic cleavage in the eye lens core. Partial proteolysis promotes interactions between tetramers from adjoining membranes. Major component of lens fiber junctions.

Its subcellular location is the cell membrane. The protein resides in the cell junction. The catalysed reaction is H2O(in) = H2O(out). Its activity is regulated as follows. The water channel activity is inhibited by calcium through calmodulin/CALM. Functionally, aquaporins form homotetrameric transmembrane channels, with each monomer independently mediating water transport across the plasma membrane along its osmotic gradient. Specifically expressed in lens fiber cells, this aquaporin is crucial for maintaining lens water homeostasis and transparency. Beyond water permeability, it also acts as a cell-to-cell adhesion molecule, forming thin junctions between lens fiber cells that are essential for maintaining the ordered structure and transparency of the lens. This Bos taurus (Bovine) protein is Lens fiber major intrinsic protein.